We begin with the raw amino-acid sequence, 422 residues long: Autophagy-related protein 21 (422 aa).

6 WD repeats span residues 1–35 (MGLS…KCFE), 102–153 (SFPH…ITGQ), 166–206 (MTSL…SKSV), 228–268 (VHKG…ESEL), 280–319 (NRPC…RLLS), and 374–414 (KNTK…GSCV). The L/FRRG motif signature appears at 276–280 (FRRGN).

This sequence belongs to the WD repeat PROPPIN family.

It localises to the cytoplasm. The protein localises to the membrane. Its subcellular location is the vacuole membrane. Its function is as follows. Required for cytoplasm to vacuole transport (Cvt) vesicles formation and mitophagy. Involved in binding of phosphatidylethanolamine to ATG8 and in recruitment of ATG8 and ATG5 to the pre-autophagosomal structure. Protects ATG8 from ARG4-mediated cleavage. The polypeptide is Autophagy-related protein 21 (ATG21) (Vanderwaltozyma polyspora (strain ATCC 22028 / DSM 70294 / BCRC 21397 / CBS 2163 / NBRC 10782 / NRRL Y-8283 / UCD 57-17) (Kluyveromyces polysporus)).